The following is a 239-amino-acid chain: Guanylate kinase (239 aa).

The Guanylate kinase-like domain occupies 19–197 (GLLIVVTGAS…AVSELLAVQQ (179 aa)). 26 to 33 (GASGVGKG) contacts ATP.

The protein belongs to the guanylate kinase family.

The protein resides in the cytoplasm. It carries out the reaction GMP + ATP = GDP + ADP. Essential for recycling GMP and indirectly, cGMP. The sequence is that of Guanylate kinase (gmk) from Deinococcus radiodurans (strain ATCC 13939 / DSM 20539 / JCM 16871 / CCUG 27074 / LMG 4051 / NBRC 15346 / NCIMB 9279 / VKM B-1422 / R1).